Consider the following 96-residue polypeptide: ESAT-6-like protein SAG1039 (96 aa).

It belongs to the WXG100 family. sagEsxA-like subfamily. Homodimer.

The protein is ESAT-6-like protein SAG1039 of Streptococcus agalactiae serotype V (strain ATCC BAA-611 / 2603 V/R).